The following is a 246-amino-acid chain: 1-(5-phosphoribosyl)-5-[(5-phosphoribosylamino)methylideneamino] imidazole-4-carboxamide isomerase (246 aa).

Asp8 functions as the Proton acceptor in the catalytic mechanism. The Proton donor role is filled by Asp131.

Belongs to the HisA/HisF family.

The protein localises to the cytoplasm. It carries out the reaction 1-(5-phospho-beta-D-ribosyl)-5-[(5-phospho-beta-D-ribosylamino)methylideneamino]imidazole-4-carboxamide = 5-[(5-phospho-1-deoxy-D-ribulos-1-ylimino)methylamino]-1-(5-phospho-beta-D-ribosyl)imidazole-4-carboxamide. The protein operates within amino-acid biosynthesis; L-histidine biosynthesis; L-histidine from 5-phospho-alpha-D-ribose 1-diphosphate: step 4/9. This is 1-(5-phosphoribosyl)-5-[(5-phosphoribosylamino)methylideneamino] imidazole-4-carboxamide isomerase from Polaromonas naphthalenivorans (strain CJ2).